A 146-amino-acid chain; its full sequence is UPF0306 protein CKO_04548 (146 aa).

This sequence belongs to the UPF0306 family.

The protein is UPF0306 protein CKO_04548 of Citrobacter koseri (strain ATCC BAA-895 / CDC 4225-83 / SGSC4696).